A 321-amino-acid chain; its full sequence is 26S proteasome non-ATPase regulatory subunit 7 (321 aa).

The region spanning 9–144 (VVVHPLVLLS…TEAYISVEEV (136 aa)) is the MPN domain. Lysine 180 participates in a covalent cross-link: Glycyl lysine isopeptide (Lys-Gly) (interchain with G-Cter in ubiquitin). N6-acetyllysine is present on residues lysine 204, lysine 214, lysine 313, and lysine 314. Residues 281–321 (ANRDAEKKEGQEKEESKKERKDDKEKEKSDAAKKEEKKEKK) are disordered.

This sequence belongs to the peptidase M67A family. Component of the 19S proteasome regulatory particle complex. The 26S proteasome consists of a 20S core particle (CP) and two 19S regulatory subunits (RP). The regulatory particle is made of a lid composed of 9 subunits including PSMD7, a base containing 6 ATPases and few additional components. Within the complex, PSMD7 interacts with subunit PSMD4 through their respective MPN domain. Interacts with TRIM5.

Functionally, component of the 26S proteasome, a multiprotein complex involved in the ATP-dependent degradation of ubiquitinated proteins. This complex plays a key role in the maintenance of protein homeostasis by removing misfolded or damaged proteins, which could impair cellular functions, and by removing proteins whose functions are no longer required. Therefore, the proteasome participates in numerous cellular processes, including cell cycle progression, apoptosis, or DNA damage repair. The sequence is that of 26S proteasome non-ATPase regulatory subunit 7 (Psmd7) from Mus musculus (Mouse).